Consider the following 269-residue polypeptide: Formamidopyrimidine-DNA glycosylase (269 aa).

P2 acts as the Schiff-base intermediate with DNA in catalysis. Residue E3 is the Proton donor of the active site. The active-site Proton donor; for beta-elimination activity is K57. Positions 90, 109, and 150 each coordinate DNA. The FPG-type zinc-finger motif lies at 235–269 (QVYGRKGEPCRVCGTPIVATKHAQRATFYCRQCQK). R259 (proton donor; for delta-elimination activity) is an active-site residue.

This sequence belongs to the FPG family. As to quaternary structure, monomer. The cofactor is Zn(2+).

It catalyses the reaction Hydrolysis of DNA containing ring-opened 7-methylguanine residues, releasing 2,6-diamino-4-hydroxy-5-(N-methyl)formamidopyrimidine.. The catalysed reaction is 2'-deoxyribonucleotide-(2'-deoxyribose 5'-phosphate)-2'-deoxyribonucleotide-DNA = a 3'-end 2'-deoxyribonucleotide-(2,3-dehydro-2,3-deoxyribose 5'-phosphate)-DNA + a 5'-end 5'-phospho-2'-deoxyribonucleoside-DNA + H(+). Its function is as follows. Involved in base excision repair of DNA damaged by oxidation or by mutagenic agents. Acts as a DNA glycosylase that recognizes and removes damaged bases. Has a preference for oxidized purines, such as 7,8-dihydro-8-oxoguanine (8-oxoG). Has AP (apurinic/apyrimidinic) lyase activity and introduces nicks in the DNA strand. Cleaves the DNA backbone by beta-delta elimination to generate a single-strand break at the site of the removed base with both 3'- and 5'-phosphates. This chain is Formamidopyrimidine-DNA glycosylase, found in Escherichia coli O6:H1 (strain CFT073 / ATCC 700928 / UPEC).